The following is a 511-amino-acid chain: Probable G-protein coupled receptor 101 (511 aa).

Topologically, residues 1 to 35 (MPPSCTNSTQENNGSRVCLPLSKMPISVAHGIIRS) are extracellular. N-linked (GlcNAc...) asparagine glycans are attached at residues N7 and N13. Residues 36-56 (VVLLVILGVAFLGNVVLGYVL) form a helical membrane-spanning segment. Topologically, residues 57-67 (HRKPNLLQVTN) are cytoplasmic. The chain crosses the membrane as a helical span at residues 68–90 (RFIFNLLVTDLLQVALVAPWVVS). The Extracellular segment spans residues 91–106 (TAIPFFWPLNIHFCTA). C104 and C182 are oxidised to a cystine. The chain crosses the membrane as a helical span at residues 107-127 (LVSLTHLFAFASVNTIVVVSV). The Cytoplasmic segment spans residues 128–149 (DRYLTIIHPLSYPSKMTNRRSY). Residues 150–170 (ILLYGTWIAAFLQSTPPLYGW) form a helical membrane-spanning segment. Topologically, residues 171 to 196 (GHATFDDRNAFCSMIWGASPAYTVVS) are extracellular. A helical transmembrane segment spans residues 197-217 (VVSFLVIPLGVMIACYSVVFG). Over 218 to 398 (AARRQQALLY…PPCYECKAAR (181 aa)) the chain is Cytoplasmic. Basic and acidic residues predominate over residues 240–261 (DSVVHENEEGAKKRDEFQDKNE). Disordered stretches follow at residues 240-315 (DSVV…EVSN) and 367-386 (EAMR…TSDP). The span at 376 to 385 (PPSRRNSTSD) shows a compositional bias: polar residues. A helical transmembrane segment spans residues 399–419 (VIFVIISTYVLSLGPYCFLAV). Over 420 to 432 (LAVWVDIDTRVPQ) the chain is Extracellular. A helical transmembrane segment spans residues 433–453 (WVITIIIWLFFLQCCIHPYVY). The Cytoplasmic portion of the chain corresponds to 454 to 511 (GYMHKSIKKEIQEVLKKLICKKSPPVEDSHPDLHETEAGTEGGIEGKAVPSHDSATSP). A disordered region spans residues 476–511 (SPPVEDSHPDLHETEAGTEGGIEGKAVPSHDSATSP). Residues 477-490 (PPVEDSHPDLHETE) are compositionally biased toward basic and acidic residues.

The protein belongs to the G-protein coupled receptor 1 family. Expressed in the brain in hypothalamus.

It is found in the cell membrane. Orphan receptor. This Mus musculus (Mouse) protein is Probable G-protein coupled receptor 101 (Gpr101).